The sequence spans 151 residues: Large ribosomal subunit protein bL9 (151 aa).

The protein belongs to the bacterial ribosomal protein bL9 family.

In terms of biological role, binds to the 23S rRNA. In Lacticaseibacillus casei (strain BL23) (Lactobacillus casei), this protein is Large ribosomal subunit protein bL9.